The sequence spans 125 residues: Small ribosomal subunit protein eS8 (125 aa).

The span at 1 to 23 (MQFQGRSRRKYTGAKLKSARGKR) shows a compositional bias: basic residues. Residues 1–34 (MQFQGRSRRKYTGAKLKSARGKRKFELGREPAAT) are disordered.

This sequence belongs to the eukaryotic ribosomal protein eS8 family. In terms of assembly, part of the 30S ribosomal subunit.

The protein is Small ribosomal subunit protein eS8 of Methanococcoides burtonii (strain DSM 6242 / NBRC 107633 / OCM 468 / ACE-M).